The primary structure comprises 391 residues: UPF0229 protein BCB4264_A0587 (391 aa).

Residues 1–16 (MGEENQPNYTISQENW) show a composition bias toward polar residues. 2 disordered regions span residues 1–31 (MGEE…RHQE) and 80–117 (HVGQ…GDAA). A compositionally biased stretch (basic and acidic residues) spans 21 to 31 (KGYDDQQRHQE). Positions 98 to 115 (GSGGQKQKGPGKGQGAGD) are enriched in gly residues.

It belongs to the UPF0229 family.

The sequence is that of UPF0229 protein BCB4264_A0587 from Bacillus cereus (strain B4264).